A 540-amino-acid chain; its full sequence is Chaperonin GroEL (540 aa).

ATP is bound by residues 29–32, 86–90, Gly-413, 476–478, and Asp-492; these read TIGP, DGTTT, and NAA.

The protein belongs to the chaperonin (HSP60) family. As to quaternary structure, forms a cylinder of 14 subunits composed of two heptameric rings stacked back-to-back. Interacts with the co-chaperonin GroES.

It localises to the cytoplasm. The catalysed reaction is ATP + H2O + a folded polypeptide = ADP + phosphate + an unfolded polypeptide.. In terms of biological role, together with its co-chaperonin GroES, plays an essential role in assisting protein folding. The GroEL-GroES system forms a nano-cage that allows encapsulation of the non-native substrate proteins and provides a physical environment optimized to promote and accelerate protein folding. The chain is Chaperonin GroEL from Staphylococcus saprophyticus subsp. saprophyticus (strain ATCC 15305 / DSM 20229 / NCIMB 8711 / NCTC 7292 / S-41).